A 295-amino-acid chain; its full sequence is tRNA dimethylallyltransferase (295 aa).

9–16 (GATATGKS) is a binding site for ATP. 11 to 16 (TATGKS) provides a ligand contact to substrate. The interaction with substrate tRNA stretch occupies residues 34-37 (DSRQ).

The protein belongs to the IPP transferase family. Monomer. Mg(2+) serves as cofactor.

It carries out the reaction adenosine(37) in tRNA + dimethylallyl diphosphate = N(6)-dimethylallyladenosine(37) in tRNA + diphosphate. Its function is as follows. Catalyzes the transfer of a dimethylallyl group onto the adenine at position 37 in tRNAs that read codons beginning with uridine, leading to the formation of N6-(dimethylallyl)adenosine (i(6)A). The protein is tRNA dimethylallyltransferase of Nostoc sp. (strain PCC 7120 / SAG 25.82 / UTEX 2576).